The chain runs to 88 residues: Small ribosomal subunit protein bS20 (88 aa).

Disordered regions lie at residues 1-22 (MPNI…AQNA) and 69-88 (KNAA…GLSA).

It belongs to the bacterial ribosomal protein bS20 family.

In terms of biological role, binds directly to 16S ribosomal RNA. The polypeptide is Small ribosomal subunit protein bS20 (Shouchella clausii (strain KSM-K16) (Alkalihalobacillus clausii)).